The chain runs to 867 residues: Putative tyrosine-protein kinase F09A5.2 (867 aa).

A run of 2 helical transmembrane segments spans residues 45 to 65 and 355 to 375; these read VMKI…FATS and LLLI…AFFV. N-linked (GlcNAc...) asparagine glycans are attached at residues asparagine 395 and asparagine 423. The region spanning 467–757 is the Protein kinase domain; that stretch reads VQEDHLLGNG…FNEMRGEITV (291 aa). 473–481 contacts ATP; it reads LGNGAFANV. Asparagine 496 and asparagine 500 each carry an N-linked (GlcNAc...) asparagine glycan. An ATP-binding site is contributed by lysine 516. Asparagine 585 carries an N-linked (GlcNAc...) asparagine glycan. Aspartate 626 functions as the Proton acceptor in the catalytic mechanism. Disordered stretches follow at residues 782-821 and 848-867; these read LTMQ…GTCA and SKSM…TYQS. Residues 801-810 show a composition bias toward acidic residues; sequence DMDEDGDYDS. A compositionally biased stretch (polar residues) spans 858-867; it reads SNSTVSTYQS. Asparagine 859 carries an N-linked (GlcNAc...) asparagine glycan.

The protein belongs to the protein kinase superfamily. Tyr protein kinase family.

It is found in the membrane. It catalyses the reaction L-tyrosyl-[protein] + ATP = O-phospho-L-tyrosyl-[protein] + ADP + H(+). In Caenorhabditis elegans, this protein is Putative tyrosine-protein kinase F09A5.2.